Reading from the N-terminus, the 238-residue chain is uncharacterized protein (238 aa).

Disordered regions lie at residues 123-167 and 180-238; these read FRQG…VHGG and SAMG…AKRR. Low complexity predominate over residues 152–161; sequence SGHSPSPGRH. Basic residues predominate over residues 207–238; the sequence is HRGHGHRFRLLAPRSRPRQRRGGGSRAAAKRR.

Belongs to the PNP/MTAP phosphorylase family.

This is an uncharacterized protein from Rhodospirillum rubrum.